Here is a 289-residue protein sequence, read N- to C-terminus: Phosphatidylglycerol--prolipoprotein diacylglyceryl transferase (289 aa).

7 helical membrane-spanning segments follow: residues 23–43 (ALHWYGLMYLVGFVFAMWLAV), 61–81 (LLYMGFLGVFVGGRLGYVLFY), 99–119 (GGMSFHGGLMGVICVMLWFAH), 125–145 (FFQVADFIAPLIPFGLGAGRL), 199–219 (SQLYQMMLEGVALFIILNLFI), 226–246 (GSVSGLFLICYGMFRIITEFF), and 259–279 (LFSMGQILSLPMVLAGILMMV). Arg-144 provides a ligand contact to a 1,2-diacyl-sn-glycero-3-phospho-(1'-sn-glycerol).

It belongs to the Lgt family.

The protein localises to the cell inner membrane. The catalysed reaction is L-cysteinyl-[prolipoprotein] + a 1,2-diacyl-sn-glycero-3-phospho-(1'-sn-glycerol) = an S-1,2-diacyl-sn-glyceryl-L-cysteinyl-[prolipoprotein] + sn-glycerol 1-phosphate + H(+). It participates in protein modification; lipoprotein biosynthesis (diacylglyceryl transfer). Catalyzes the transfer of the diacylglyceryl group from phosphatidylglycerol to the sulfhydryl group of the N-terminal cysteine of a prolipoprotein, the first step in the formation of mature lipoproteins. This is Phosphatidylglycerol--prolipoprotein diacylglyceryl transferase from Pectobacterium atrosepticum (strain SCRI 1043 / ATCC BAA-672) (Erwinia carotovora subsp. atroseptica).